The following is a 207-amino-acid chain: ADP-ribose pyrophosphatase (207 aa).

Residues 37-38 (RE) and arginine 64 contribute to the substrate site. The region spanning 41-172 (EHFGAVAIVA…EIVNSIAIAG (132 aa)) is the Nudix hydrolase domain. Alanine 76 lines the Mg(2+) pocket. Residues 77–99 (GLLDVAGEPPHLTAARELREEVG) carry the Nudix box motif. Leucine 78 is a substrate binding site. Mg(2+)-binding residues include glutamate 93 and glutamate 97. Substrate is bound by residues 114-116 (APG) and glutamate 120. Mg(2+) is bound at residue glutamate 142. Glutamate 142 (proton acceptor) is an active-site residue.

This sequence belongs to the Nudix hydrolase family. As to quaternary structure, homodimer. The cofactor is Mg(2+). It depends on Mn(2+) as a cofactor.

It catalyses the reaction ADP-D-ribose + H2O = D-ribose 5-phosphate + AMP + 2 H(+). The catalysed reaction is 8-oxo-dGDP + H2O = 8-oxo-dGMP + phosphate + H(+). It carries out the reaction 8-oxo-GDP + H2O = 8-oxo-GMP + phosphate + H(+). Catalyzes the hydrolysis of ADP-ribose (ADPR) to AMP and ribose-5-phosphate. Can also hydrolyze ADP-mannose and ADP-glucose, with lower efficiency. Has weaker activity with NAD, GDP-sugars and UDP-sugars. Also catalyzes the conversion of 8-oxo-dGDP to 8-oxo-dGMP, and 8-oxo-GDP to 8-oxo-GMP. Functions in concert with MutT1 to detoxify 8-oxo-dGTP to 8-oxo-dGMP and may play an important role in supporting cellular growth under oxidative stress. The catalytic efficiency is much higher for the hydrolysis of ADPR than 8-oxo-dGTP, suggesting a more relevant biological role in hydrolysis of ADPR. This Mycobacterium tuberculosis (strain ATCC 25618 / H37Rv) protein is ADP-ribose pyrophosphatase.